A 264-amino-acid polypeptide reads, in one-letter code: Small ribosomal subunit protein eS1 (264 aa).

Lys34 bears the N6-acetyllysine; alternate mark. Lys34 participates in a covalent cross-link: Glycyl lysine isopeptide (Lys-Gly) (interchain with G-Cter in SUMO2); alternate. Position 56 is an N6-acetyllysine (Lys56). ADP-ribosyltyrosine is present on Tyr155. Residues 233–264 are disordered; sequence GEGGSSGKAAGDETGAKVERADGYEPPVQESV. Ser237 carries the phosphoserine modification. Over residues 242-255 the composition is skewed to basic and acidic residues; sequence AGDETGAKVERADG. An N6-acetyllysine; alternate modification is found at Lys249. Lys249 is covalently cross-linked (Glycyl lysine isopeptide (Lys-Gly) (interchain with G-Cter in SUMO2); alternate). Residue Tyr256 is modified to Phosphotyrosine. Ser263 carries the post-translational modification Phosphoserine.

It belongs to the eukaryotic ribosomal protein eS1 family. In terms of assembly, component of the small ribosomal subunit. Mature ribosomes consist of a small (40S) and a large (60S) subunit. The 40S subunit contains about 33 different proteins and 1 molecule of RNA (18S). The 60S subunit contains about 49 different proteins and 3 molecules of RNA (28S, 5.8S and 5S). Identified in a IGF2BP1-dependent mRNP granule complex containing untranslated mRNAs. Binds with high affinity to IPO4. Interacts with DDIT3. Part of the small subunit (SSU) processome, composed of more than 70 proteins and the RNA chaperone small nucleolar RNA (snoRNA) U3. Post-translationally, ADP-ribosylated at Tyr-155 by PARP1 in presence of HPF1.

It localises to the cytoplasm. Its subcellular location is the nucleus. The protein resides in the nucleolus. Functionally, component of the small ribosomal subunit. The ribosome is a large ribonucleoprotein complex responsible for the synthesis of proteins in the cell. Part of the small subunit (SSU) processome, first precursor of the small eukaryotic ribosomal subunit. During the assembly of the SSU processome in the nucleolus, many ribosome biogenesis factors, an RNA chaperone and ribosomal proteins associate with the nascent pre-rRNA and work in concert to generate RNA folding, modifications, rearrangements and cleavage as well as targeted degradation of pre-ribosomal RNA by the RNA exosome. May play a role during erythropoiesis through regulation of transcription factor DDIT3. The chain is Small ribosomal subunit protein eS1 (Rps3a) from Mus musculus (Mouse).